Here is a 403-residue protein sequence, read N- to C-terminus: Alpha-1-antiproteinase F (403 aa).

A signal peptide spans 1 to 22 (SAIPRGLLLLAGLCCLVFGIMA). N-linked (GlcNAc...) asparagine glycans are attached at residues asparagine 55, asparagine 92, asparagine 155, asparagine 222, and asparagine 256. Residues 358–377 (GATELEITPHSVPQDLFFNK) form an RCL region.

Belongs to the serpin family.

The protein localises to the secreted. Functionally, inhibits elastase, chymotrypsin, cathepsin G, plasmin, and trypsin. This Cavia porcellus (Guinea pig) protein is Alpha-1-antiproteinase F.